Here is a 156-residue protein sequence, read N- to C-terminus: MQTTKNQDDLVRIFKSILKEERFGSQSEIVTALQAEGFGNINQSKVSRMLSKFGAVRTRNAKQEMVYCLPAELGVPTAGSPLKNLVLDVDHNQAMIVVRTSPGAAQLIARLLDSIGKPEGILGTIAGDDTIFICPSSIQDIADTLETIKSLFNYAE.

The protein belongs to the ArgR family.

The protein resides in the cytoplasm. The protein operates within amino-acid biosynthesis; L-arginine biosynthesis [regulation]. Its function is as follows. Regulates arginine biosynthesis genes. The chain is Arginine repressor from Shewanella baltica (strain OS223).